Consider the following 212-residue polypeptide: MSKGFLVSLEGPEGAGKTSVLEALLPILEEKGVEVLTTREPGGVLIGEKIREVILDPSHTQMDAKTELLLYIASRRQHLVEKVLPALEAGKLVIMDRFIDSSVAYQGFGRGLDIEAIDWLNQFATDGLKPDLTLYFDIEVEEGLARIAANSDREVNRLDLEGLDLHKKVRQGYLSLLDKEGNRIVKIDASLPLEQVVETTKAVLFDGMGLAK.

11–18 (GPEGAGKT) contacts ATP.

It belongs to the thymidylate kinase family.

It catalyses the reaction dTMP + ATP = dTDP + ADP. Its function is as follows. Phosphorylation of dTMP to form dTDP in both de novo and salvage pathways of dTTP synthesis. The chain is Thymidylate kinase from Streptococcus pneumoniae serotype 19F (strain G54).